Reading from the N-terminus, the 345-residue chain is Phosphate acyltransferase (345 aa).

The protein belongs to the PlsX family. In terms of assembly, homodimer. Probably interacts with PlsY.

The protein resides in the cytoplasm. It catalyses the reaction a fatty acyl-[ACP] + phosphate = an acyl phosphate + holo-[ACP]. It functions in the pathway lipid metabolism; phospholipid metabolism. Catalyzes the reversible formation of acyl-phosphate (acyl-PO(4)) from acyl-[acyl-carrier-protein] (acyl-ACP). This enzyme utilizes acyl-ACP as fatty acyl donor, but not acyl-CoA. The protein is Phosphate acyltransferase of Wolbachia sp. subsp. Drosophila simulans (strain wRi).